A 232-amino-acid chain; its full sequence is Orotidine 5'-phosphate decarboxylase (232 aa).

Residues aspartate 16, lysine 38, 65 to 74 (DLKLHDIGNT), threonine 119, arginine 180, glutamine 189, glycine 209, and arginine 210 each bind substrate. Lysine 67 functions as the Proton donor in the catalytic mechanism.

This sequence belongs to the OMP decarboxylase family. Type 1 subfamily. In terms of assembly, homodimer.

The catalysed reaction is orotidine 5'-phosphate + H(+) = UMP + CO2. Its pathway is pyrimidine metabolism; UMP biosynthesis via de novo pathway; UMP from orotate: step 2/2. Catalyzes the decarboxylation of orotidine 5'-monophosphate (OMP) to uridine 5'-monophosphate (UMP). In Methylorubrum populi (strain ATCC BAA-705 / NCIMB 13946 / BJ001) (Methylobacterium populi), this protein is Orotidine 5'-phosphate decarboxylase.